We begin with the raw amino-acid sequence, 447 residues long: Polyamine export protein (447 aa).

Over 1 to 4 (MLNS) the chain is Cytoplasmic. A CNNM transmembrane domain is found at 1 to 197 (MLNSILVILC…ALAGVLRKQE (197 aa)). A helical membrane pass occupies residues 5 to 25 (ILVILCLIAVSAFFSMSEISL). Residues 26–54 (AASRKIKLKLLADEGNINAQRVLNMQENP) are Periplasmic-facing. The helical transmembrane segment at 55–75 (GMFFTVVQIGLNAVAILGGIV) threads the bilayer. Over 76–99 (GDAAFSPAFHSLFSRYMSAELSEQ) the chain is Cytoplasmic. Residues 100 to 120 (LSFILSFSLVTGMFILFADLT) traverse the membrane as a helical segment. The Periplasmic portion of the chain corresponds to 121-141 (PKRIGMIAPEAVALRIINPMR). Residues 142 to 162 (FCLYVCTPLVWFFNGLANIIF) form a helical membrane-spanning segment. At 163–447 (RIFKLPMVRK…DAKDKEESVA (285 aa)) the chain is on the cytoplasmic side. 2 CBS domains span residues 216 to 275 (MTPR…NQSL) and 282 to 343 (QIRN…GLEE).

It belongs to the UPF0053 family. PaeA subfamily.

The protein resides in the cell inner membrane. In terms of biological role, involved in cadaverine and putrescine tolerance in stationary phase. May facilitate the efflux of both cadaverine and putrescine from the cytoplasm, reducing potentially toxic levels under certain stress conditions. This is Polyamine export protein from Escherichia coli O157:H7.